Here is a 198-residue protein sequence, read N- to C-terminus: Na(+)-translocating NADH-quinone reductase subunit E (198 aa).

Helical transmembrane passes span 11-31 (AVFV…FLAV), 35-55 (VSTA…SVPA), 77-97 (FLNF…LEMI), 109-129 (LGIF…VSFM), 140-160 (IVYG…LAGI), and 176-196 (LGIT…FAGV).

Belongs to the NqrDE/RnfAE family. In terms of assembly, composed of six subunits; NqrA, NqrB, NqrC, NqrD, NqrE and NqrF.

The protein localises to the cell inner membrane. The catalysed reaction is a ubiquinone + n Na(+)(in) + NADH + H(+) = a ubiquinol + n Na(+)(out) + NAD(+). NQR complex catalyzes the reduction of ubiquinone-1 to ubiquinol by two successive reactions, coupled with the transport of Na(+) ions from the cytoplasm to the periplasm. NqrA to NqrE are probably involved in the second step, the conversion of ubisemiquinone to ubiquinol. This is Na(+)-translocating NADH-quinone reductase subunit E from Yersinia pestis bv. Antiqua (strain Nepal516).